Consider the following 682-residue polypeptide: MKQSHKTILLWALLIFLFVMIYNLISDGTSGEETLDTTEFKTLLQARIDERLADAGEGPALSDDRRALAQRAGEIASVTVEPNPNDNATYVLRYEGSGEDGLDPDKKTLVYGEYKGTIENLLTAAGISYEVKAKEESTFWQSLLISWLPMLLLFALFFFFMRQLQAGGGKAMSFGKSKARLLTDHQNKVTFKDVAGVEEAKDEVEEIIAFLKDPKKFTRLGGRIPKGVLMMGPPGTGKTLLARAIAGEAGVPFFSISGSDFVEMFVGVGASRVRDLFEQGKKNAPCIIFIDEIDAVGRHRGAGLGGGHDEREQTLNQLLVEMDGFESNDGVILIAATNRPDVLDPALLRPGRFDRRIIVPRPDLRGRTGILGVHTRKVPLSTEVALEVIARGTPGFSGADLESLVNEAALIAARRDKDRVDMEDFEDAKDKVMMGAERRSMIISDKEKRTTAYHEAGHALVAKLVGAETDPVHKVSIIPRGRALGVTQLLPTEDRLGFTREFALNKIAILMGGRLAEELVLKQKTTGAGDDIDKATDLARRMVTEWGMSDVIGPLNFASGGKQEVFLGRDLPQAEAYSQETAQRIDGEIRRIVTDQYERARRMLEENRDALERVARGLLEYETLDGNDIDTLCQGGRLSRPAVVSKPSADAESSVDEDEREARPALFPPLGKSGTDPEPEPA.

Residues 1 to 7 lie on the Cytoplasmic side of the membrane; the sequence is MKQSHKT. The chain crosses the membrane as a helical span at residues 8–28; it reads ILLWALLIFLFVMIYNLISDG. The Periplasmic segment spans residues 29–138; the sequence is TSGEETLDTT…YEVKAKEEST (110 aa). A helical membrane pass occupies residues 139 to 159; it reads FWQSLLISWLPMLLLFALFFF. Residues 160 to 682 are Cytoplasmic-facing; that stretch reads FMRQLQAGGG…SGTDPEPEPA (523 aa). 232 to 239 is a binding site for ATP; sequence GPPGTGKT. Residue His454 coordinates Zn(2+). Glu455 is a catalytic residue. The Zn(2+) site is built by His458 and Asp531. The segment at 638–682 is disordered; the sequence is LSRPAVVSKPSADAESSVDEDEREARPALFPPLGKSGTDPEPEPA.

The protein in the central section; belongs to the AAA ATPase family. This sequence in the C-terminal section; belongs to the peptidase M41 family. Homohexamer. Zn(2+) is required as a cofactor.

The protein localises to the cell inner membrane. Functionally, acts as a processive, ATP-dependent zinc metallopeptidase for both cytoplasmic and membrane proteins. Plays a role in the quality control of integral membrane proteins. The polypeptide is ATP-dependent zinc metalloprotease FtsH (Haliangium ochraceum (strain DSM 14365 / JCM 11303 / SMP-2)).